A 133-amino-acid chain; its full sequence is ATP synthase epsilon chain (133 aa).

This sequence belongs to the ATPase epsilon chain family. F-type ATPases have 2 components, CF(1) - the catalytic core - and CF(0) - the membrane proton channel. CF(1) has five subunits: alpha(3), beta(3), gamma(1), delta(1), epsilon(1). CF(0) has three main subunits: a, b and c.

It is found in the cell membrane. In terms of biological role, produces ATP from ADP in the presence of a proton gradient across the membrane. This chain is ATP synthase epsilon chain (atpC), found in Clostridium acetobutylicum (strain ATCC 824 / DSM 792 / JCM 1419 / IAM 19013 / LMG 5710 / NBRC 13948 / NRRL B-527 / VKM B-1787 / 2291 / W).